We begin with the raw amino-acid sequence, 436 residues long: Xylose isomerase (436 aa).

Residues histidine 100 and aspartate 103 contribute to the active site. 7 residues coordinate Mg(2+): glutamate 231, glutamate 267, histidine 270, aspartate 295, aspartate 306, aspartate 308, and aspartate 338.

It belongs to the xylose isomerase family. As to quaternary structure, homotetramer. Requires Mg(2+) as cofactor.

It is found in the cytoplasm. The enzyme catalyses alpha-D-xylose = alpha-D-xylulofuranose. The protein is Xylose isomerase of Rhizobium etli (strain CIAT 652).